Reading from the N-terminus, the 397-residue chain is Lysophospholipid transporter LplT (397 aa).

Residues 1–17 (MSESVHTNTSLWSKGMK) lie on the Periplasmic side of the membrane. The chain crosses the membrane as a helical span at residues 18–38 (AVIVAQFLSAFGDNALLFATL). Residues 39 to 52 (ALLNAQFYPEWSQP) lie on the Cytoplasmic side of the membrane. A helical transmembrane segment spans residues 53–73 (ILQMVFVGAYILFAPFVGQVA). Residues 74-90 (DSFAKGRVMMFANGLKL) lie on the Periplasmic side of the membrane. The chain crosses the membrane as a helical span at residues 91-111 (LGAASICFGINPFLGYTLVGV). The Cytoplasmic segment spans residues 112 to 144 (GAAAYSPAKYGILGELTTGSKLVKANGLMEAST). The helical transmembrane segment at 145–165 (IAAILLGSVAGGVLADWHVLV) threads the bilayer. Ala166 is a topological domain (periplasmic). Residues 167–187 (LAACALAYGGAVVANIYIPKL) traverse the membrane as a helical segment. Residues 188-226 (AAARPGQSWNLINMTRSFLNACTSLWRNGETRFSLVGTS) are Cytoplasmic-facing. A helical transmembrane segment spans residues 227-247 (LFWGAGVTLRFLLVLWVPVAL). The Periplasmic portion of the chain corresponds to 248-256 (GITDNATPT). The helical transmembrane segment at 257-277 (YLNAMVAIGIVVGAGAAAKLV) threads the bilayer. Residues 278–280 (TLE) are Cytoplasmic-facing. A helical membrane pass occupies residues 281-301 (TVSRCMPAGILIGVVVLIFSL). Topologically, residues 302 to 304 (QHE) are periplasmic. Residues 305–325 (LLPAYALLMLIGVMGGFFVVP) form a helical membrane-spanning segment. The Cytoplasmic portion of the chain corresponds to 326 to 343 (LNALLQERGKKSVGAGNA). A helical membrane pass occupies residues 344-364 (IAVQNLGENSAMLLMLGIYSL). Residues 365-366 (AV) lie on the Periplasmic side of the membrane. Residues 367–387 (MIGIPVVPIGIGFGALFALAI) form a helical membrane-spanning segment. The Cytoplasmic segment spans residues 388-397 (TALWIWQRRH).

Belongs to the major facilitator superfamily. LplT (TC 2.A.1.42) family.

Its subcellular location is the cell inner membrane. Functionally, catalyzes the facilitated diffusion of 2-acyl-glycero-3-phosphoethanolamine (2-acyl-GPE) into the cell. The polypeptide is Lysophospholipid transporter LplT (Escherichia coli (strain SE11)).